A 95-amino-acid polypeptide reads, in one-letter code: Large ribosomal subunit protein uL23 (95 aa).

The protein belongs to the universal ribosomal protein uL23 family. In terms of assembly, part of the 50S ribosomal subunit. Contacts protein L29, and trigger factor when it is bound to the ribosome.

Its function is as follows. One of the early assembly proteins it binds 23S rRNA. One of the proteins that surrounds the polypeptide exit tunnel on the outside of the ribosome. Forms the main docking site for trigger factor binding to the ribosome. The sequence is that of Large ribosomal subunit protein uL23 from Desulfitobacterium hafniense (strain DSM 10664 / DCB-2).